The chain runs to 253 residues: 1-(5-phosphoribosyl)-5-[(5-phosphoribosylamino)methylideneamino] imidazole-4-carboxamide isomerase (253 aa).

The active-site Proton acceptor is the Asp-8. Asp-131 serves as the catalytic Proton donor.

Belongs to the HisA/HisF family.

Its subcellular location is the cytoplasm. It catalyses the reaction 1-(5-phospho-beta-D-ribosyl)-5-[(5-phospho-beta-D-ribosylamino)methylideneamino]imidazole-4-carboxamide = 5-[(5-phospho-1-deoxy-D-ribulos-1-ylimino)methylamino]-1-(5-phospho-beta-D-ribosyl)imidazole-4-carboxamide. It participates in amino-acid biosynthesis; L-histidine biosynthesis; L-histidine from 5-phospho-alpha-D-ribose 1-diphosphate: step 4/9. The protein is 1-(5-phosphoribosyl)-5-[(5-phosphoribosylamino)methylideneamino] imidazole-4-carboxamide isomerase of Polynucleobacter asymbioticus (strain DSM 18221 / CIP 109841 / QLW-P1DMWA-1) (Polynucleobacter necessarius subsp. asymbioticus).